The primary structure comprises 402 residues: Ferrochelatase, mitochondrial (402 aa).

The N-terminal 33 residues, 1–33 (MAAAGRAARPLVAGGRQLRVPLRWRGQVAAAAP), are a transit peptide targeting the mitochondrion. 3 residues coordinate protoporphyrin IX: Arg-94, Tyr-102, and Ser-109. A [2Fe-2S] cluster-binding site is contributed by Cys-175. Catalysis depends on residues His-209 and Asp-362. The [2Fe-2S] cluster site is built by Cys-382, Cys-385, and Cys-390.

Belongs to the ferrochelatase family. Homodimer. Homotetramer. Requires [2Fe-2S] cluster as cofactor.

The protein localises to the mitochondrion inner membrane. It carries out the reaction heme b + 2 H(+) = protoporphyrin IX + Fe(2+). It participates in porphyrin-containing compound metabolism; protoheme biosynthesis; protoheme from protoporphyrin-IX: step 1/1. Functionally, catalyzes the ferrous insertion into protoporphyrin IX. In Gallus gallus (Chicken), this protein is Ferrochelatase, mitochondrial.